The sequence spans 719 residues: Photosystem I P700 chlorophyll a apoprotein A1 (719 aa).

8 helical membrane-spanning segments follow: residues 59–82, 145–168, 184–208, 280–298, 335–358, 374–400, 422–444, and 520–538; these read IFGAHFGQLAIIFIWLSGMYFHGA, LYCTAVGALIFAGLMFFAGWFHYH, LNHHLAGLLGLGSLGWAGHQIHVSL, TAHHHLAIAVLFLVAGHMY, WHAQLAINLAMLGSLTIIVSHHMY, LSLFTHHMWIGGFLVVGAAAHAAIFMV, AIISHLNWVCIFLGFHSFGLYIH, and FLVHHIHAFTIHVTVLILL. Cys562 and Cys571 together coordinate [4Fe-4S] cluster. 2 consecutive transmembrane segments (helical) span residues 578–599 and 653–675; these read HVFLGLFWMYNSISVVIFHFSW and LSAYGLLFLGAHFVWAFSLMFLF. His664 contributes to the chlorophyll a' binding site. Chlorophyll a-binding residues include Met672 and Tyr680. Position 681 (Trp681) interacts with phylloquinone. The helical transmembrane segment at 713–719 threads the bilayer; sequence AVGVTHT.

Belongs to the PsaA/PsaB family. The PsaA/B heterodimer binds the P700 chlorophyll special pair and subsequent electron acceptors. PSI consists of a core antenna complex that captures photons, and an electron transfer chain that converts photonic excitation into a charge separation. The eukaryotic PSI reaction center is composed of at least 11 subunits. It depends on P700 is a chlorophyll a/chlorophyll a' dimer, A0 is one or more chlorophyll a, A1 is one or both phylloquinones and FX is a shared 4Fe-4S iron-sulfur center. as a cofactor.

The protein localises to the plastid. The protein resides in the chloroplast thylakoid membrane. The catalysed reaction is reduced [plastocyanin] + hnu + oxidized [2Fe-2S]-[ferredoxin] = oxidized [plastocyanin] + reduced [2Fe-2S]-[ferredoxin]. Its function is as follows. PsaA and PsaB bind P700, the primary electron donor of photosystem I (PSI), as well as the electron acceptors A0, A1 and FX. PSI is a plastocyanin-ferredoxin oxidoreductase, converting photonic excitation into a charge separation, which transfers an electron from the donor P700 chlorophyll pair to the spectroscopically characterized acceptors A0, A1, FX, FA and FB in turn. Oxidized P700 is reduced on the lumenal side of the thylakoid membrane by plastocyanin. The chain is Photosystem I P700 chlorophyll a apoprotein A1 from Asplenium nidus (Bird's nest fern).